The primary structure comprises 692 residues: MSNISWYRHCSVRLQLVTLALFLLLGSASLGSAHIDEEFEDDVTTTISSIASPMRRTYTNEWAVRIAGGKVEEANRLANKYGYTNLGPIIPGDEYYLFRDDRKKSRSSRKTRSLSANQLQHEEDVMWMEQQVAKRRVKRGYRRIRRHTDDNDIFEEDDDGTQISKSRNRKHPDPNDPLWTDMWYLNRGEHHSDSTTRMDHNVKEAWDLGYTGKGVVVTILDDGLERTHPDISPNYDERASYDVNDRDNDPMPRYEFSDENRHGTRCAGEVAAIFNNSLCIVGIAYNANIGGIRMLDGDVTDAVEAASVGHNADYIDIYSASWGPDDDGRTVDGPAKLTRSAFEKGITMGRKGKGSIFVWASGNGGKDADSCNCDGYTNSIYTLSISSATENGNIPWYSEACSSTLATTYSSGATGEKMILTTDLHHACTNMHTGTSASAPLAAGIVALALEANPNLTWRDLQHIVIRTAKPINLRAGDWTTNGVGRNVSHSFGYGLMDAGAMVKLAKIWKKVDEQHRCRQFYPSRYKNIPNGNRLQLQLYSDGCYGGADENKVSYVEHVQAIVTLKAPKRGDLQIYLTSPSGTKSTLLTKRARDTSRSGFTDWAFMTTHNWGEQAAGLWILEIDNDGWDDAELVKWELVLYGTDRETGDFGGQHASPLAVRSVQMEATSSGTQYSIFHVITLVILTFSQILY.

The signal sequence occupies residues 1–33 (MSNISWYRHCSVRLQLVTLALFLLLGSASLGSA). Residue Asn-3 is glycosylated (N-linked (GlcNAc...) asparagine). A propeptide spanning residues 34 to 139 (HIDEEFEDDV…QQVAKRRVKR (106 aa)) is cleaved from the precursor. Residues 140–670 (GYRRIRRHTD…RSVQMEATSS (531 aa)) are Lumenal-facing. The interval 152-177 (DIFEEDDDGTQISKSRNRKHPDPNDP) is disordered. Position 176 (Asp-176) interacts with Ca(2+). A Peptidase S8 domain is found at 182–503 (MWYLNRGEHH…YGLMDAGAMV (322 aa)). Catalysis depends on Asp-221, which acts as the Charge relay system. Asp-222 serves as a coordination point for substrate. Ca(2+) contacts are provided by Asp-230, Asp-242, Asp-247, and Asp-249. A disordered region spans residues 230–249 (DISPNYDERASYDVNDRDND). Residue 259 to 260 (EN) participates in substrate binding. His-262 acts as the Charge relay system in catalysis. Ile-273 is a binding site for Ca(2+). Residue Asn-275 is glycosylated (N-linked (GlcNAc...) asparagine). 3 residues coordinate Ca(2+): Asn-276, Leu-278, and Ile-280. Disulfide bonds link Cys-279–Cys-428 and Cys-371–Cys-401. Residues Glu-304, 321–326 (SWGPDD), Asp-332, and 360–363 (ASGN) each bind substrate. A Ca(2+)-binding site is contributed by Asp-326. Residue Asp-369 coordinates Ca(2+). Substrate-binding residues include Asp-374 and Tyr-376. Glu-399 is a Ca(2+) binding site. Ser-436 (charge relay system) is an active-site residue. Residue Ser-436 participates in substrate binding. Asn-455 and Asn-487 each carry an N-linked (GlcNAc...) asparagine glycan. The 135-residue stretch at 512–646 (VDEQHRCRQF…ELVLYGTDRE (135 aa)) folds into the P/Homo B domain. Cysteines 518 and 544 form a disulfide. A Cell attachment site motif is present at residues 570–572 (RGD). The chain crosses the membrane as a helical span at residues 671–692 (GTQYSIFHVITLVILTFSQILY).

Belongs to the peptidase S8 family. Furin subfamily. As to quaternary structure, interacts (via extracellular domain) with receptor dma-1 (via extracellular domain); the interaction promotes dma-1 internalization. The cofactor is Ca(2+). In terms of tissue distribution, expressed in the nervous system including the ventral nerve cord, the nerve ring and the retrovesicular ganglion, and in epithelial cells. Expressed in IL2 neurons. Expressed in PVD mechanosensory neurons. Expressed in pharynx with strong expression in the g2 pharyngeal gland cells and vpi pharyngeal intestinal valve cells. Expressed in intestine.

It localises to the cell membrane. The protein localises to the perikaryon. It is found in the cell projection. The protein resides in the axon. In terms of biological role, furin-like protease which cleaves proproteins at the RX(K/R)R consensus motif. During neuronal development, regulates the formation and extension of dendrite branches and cellular positioning of various type of neurons. Together with chin-1 and cdc-42, plays a role in the development of the neuropil and is required for the guidance of axons from neurons, including SubL pioneer neurons and AIY interneurons, into the nerve ring. Its role in axon guidance in glia and pioneer neurons may be through ensuring the fmi-1 protein is correctly localized to the nerve ring. Promotes the formation, extension and self-avoidance of dendritic branches of PVD and FLP mechanosensory neurons. In PVD neurons, regulates plasma membrane levels of branching receptor dma-1 by targeting it to late endosomes and thus promotes normal dendrite branching and dendrite self-avoidance. Also controls dendrite extension in AIY and D-type motoneurons, dendrite branching in AQR sensory neurons and VC4/5 motoneurons, the normal number of dendritic branches in AVL neurons and the positioning of HSN and ALM/PLM neurons. Dispensable for maintaining dendrite branching in adults. Also regulates dauer-specific dendritic branching of IL2 neurons and dauer-specific nictation behavior. Under adverse environmental conditions, may promote dauer formation by processing insulin-like proteins ins-1 and ins-18, two daf-2/InsR antagonists. The protein is Furin-like protease kpc-1 of Caenorhabditis elegans.